The chain runs to 47 residues: Turripeptide Ici9.1 (47 aa).

3 disulfide bridges follow: Cys1–Cys31, Cys5–Cys24, and Cys13–Cys45. Residues Cys1–Gln47 form the Kazal-like domain.

Belongs to the conopeptide P-like superfamily. Expressed by the venom duct.

The protein localises to the secreted. Acts as a neurotoxin by inhibiting an ion channel. May also act as a serine protease inhibitor, since it possess the kazal serine protease inhibitor signature. In Iotyrris cingulifera (Sea snail), this protein is Turripeptide Ici9.1.